The sequence spans 186 residues: Testis-expressed protein 36 (186 aa).

Residues 1–52 (MTKGRRFNPPSDKDGRWFPHIGLTQKTPESITSATSKEPQSPHLPRQAEGKL) form a disordered region. Residues 24–39 (TQKTPESITSATSKEP) show a composition bias toward polar residues.

This Homo sapiens (Human) protein is Testis-expressed protein 36 (TEX36).